A 365-amino-acid polypeptide reads, in one-letter code: G-protein coupled receptor 4 (365 aa).

Topologically, residues 1 to 10 (MDNSTGTWEG) are extracellular. The N-linked (GlcNAc...) asparagine glycan is linked to Asn-3. A helical membrane pass occupies residues 11 to 47 (CHVDSRVDHLFPPSLYIFVIGVGLPTNCLALWAAYRQ). Intrachain disulfides connect Cys-11-Cys-260 and Cys-92-Cys-170. The Cytoplasmic portion of the chain corresponds to 48–51 (VRQR). The chain crosses the membrane as a helical span at residues 52-82 (NELGVYLMNLSIADLLYICTLPLWVDYFLHH). At 83-87 (DNWIH) the chain is on the extracellular side. Residues 88 to 123 (GPGSCKLFGFIFYSNIYISIAFLCCISVDRYLAVAH) traverse the membrane as a helical segment. At 124–131 (PLRFARLR) the chain is on the cytoplasmic side. Residues 132-158 (RVKTAVAVSSVVWATELGANSAPLFHD) traverse the membrane as a helical segment. Residues 159 to 174 (ELFRDRYNHTFCFEKF) lie on the Extracellular side of the membrane. The tract at residues 159–174 (ELFRDRYNHTFCFEKF) is extracellular loop 2 (ECL2). N-linked (GlcNAc...) asparagine glycosylation is present at Asn-166. Residues 175-212 (PMERWVAWMNLYRVFVGFLFPWALMLLCYRGILRAVQS) form a helical membrane-spanning segment. Topologically, residues 213-216 (SVST) are cytoplasmic. Residues 217-252 (ERQEKVKIKRLALSLIAIVLVCFAPYHALLLSRSAV) form a helical membrane-spanning segment. At 253–262 (YLGRPWDCGF) the chain is on the extracellular side. The helical transmembrane segment at 263–291 (EERVFSAYHSSLAFTSLNCVADPILYCLV) threads the bilayer. At 292–365 (NEGARSDVAK…PLKVLLPPAQ (74 aa)) the chain is on the cytoplasmic side.

Belongs to the G-protein coupled receptor 1 family.

The protein localises to the cell membrane. Activated by a network of residues that connects an extracellular-facing cavity to Glu-147, a conserved charged residue buried in the transmembrane core of the receptor. Protonation likely drives conformational changes in extracellular loop 2 (ECL2), which stabilizes movement of transmembrane 3 (TM3) and a series of rearrangements that connect the extracellular-facing cavity to Glu-147, a residue only conserved in proton-sensing G-protein coupled receptors. Its function is as follows. Proton-sensing G-protein coupled receptor activated by extracellular pH, which is required to monitor pH changes and generate adaptive reactions. Activated by an optimal pH of 6.8-7.2. Ligand binding causes a conformation change that triggers signaling via guanine nucleotide-binding proteins (G proteins) and modulates the activity of downstream effectors, such as adenylate cyclase. GPR4 is mainly coupled to G(s) G proteins and mediates activation of adenylate cyclase activity. May also couple with G(q) and G(12)/G(13) G proteins. Acts as a key regulator of respiratory sensitivity to CO2/H(+) in brain retrotrapezoid nucleus neurons: acts by mediating detection of protons generated by the formation of carbonic acid in the blood, an important mechanism to impulse to breathe. Also acts as a regulator of acid secretion in the kidney collecting duct by maintaining acid-base homeostasis in the kidney. Acidosis-induced GPR4 activation increases paracellular gap formation and permeability of vascular endothelial cells, possibly through the G(12)/G(13)/Rho GTPase signaling pathway. The polypeptide is G-protein coupled receptor 4 (Rattus norvegicus (Rat)).